The following is a 213-amino-acid chain: Imidazole glycerol phosphate synthase subunit HisH (213 aa).

The Glutamine amidotransferase type-1 domain maps to 6-213 (LVTVIDYGMG…FKNFLNWNGQ (208 aa)). Cysteine 86 (nucleophile) is an active-site residue. Active-site residues include histidine 192 and glutamate 194.

Heterodimer of HisH and HisF.

It localises to the cytoplasm. It catalyses the reaction 5-[(5-phospho-1-deoxy-D-ribulos-1-ylimino)methylamino]-1-(5-phospho-beta-D-ribosyl)imidazole-4-carboxamide + L-glutamine = D-erythro-1-(imidazol-4-yl)glycerol 3-phosphate + 5-amino-1-(5-phospho-beta-D-ribosyl)imidazole-4-carboxamide + L-glutamate + H(+). The enzyme catalyses L-glutamine + H2O = L-glutamate + NH4(+). It functions in the pathway amino-acid biosynthesis; L-histidine biosynthesis; L-histidine from 5-phospho-alpha-D-ribose 1-diphosphate: step 5/9. Its function is as follows. IGPS catalyzes the conversion of PRFAR and glutamine to IGP, AICAR and glutamate. The HisH subunit catalyzes the hydrolysis of glutamine to glutamate and ammonia as part of the synthesis of IGP and AICAR. The resulting ammonia molecule is channeled to the active site of HisF. The protein is Imidazole glycerol phosphate synthase subunit HisH of Hydrogenovibrio crunogenus (strain DSM 25203 / XCL-2) (Thiomicrospira crunogena).